Consider the following 318-residue polypeptide: Ribonuclease Z (318 aa).

Zn(2+)-binding residues include histidine 62, histidine 64, aspartate 66, histidine 67, histidine 139, aspartate 210, and histidine 268. Residue aspartate 66 is the Proton acceptor of the active site.

This sequence belongs to the RNase Z family. In terms of assembly, homodimer. Zn(2+) serves as cofactor.

The enzyme catalyses Endonucleolytic cleavage of RNA, removing extra 3' nucleotides from tRNA precursor, generating 3' termini of tRNAs. A 3'-hydroxy group is left at the tRNA terminus and a 5'-phosphoryl group is left at the trailer molecule.. Its function is as follows. Zinc phosphodiesterase, which displays some tRNA 3'-processing endonuclease activity. Probably involved in tRNA maturation, by removing a 3'-trailer from precursor tRNA. The sequence is that of Ribonuclease Z from Microcystis aeruginosa (strain NIES-843 / IAM M-2473).